The sequence spans 297 residues: Acetylglutamate kinase (297 aa).

Substrate is bound by residues 73-74, R95, and N188; that span reads GG.

The protein belongs to the acetylglutamate kinase family. ArgB subfamily.

It localises to the cytoplasm. It carries out the reaction N-acetyl-L-glutamate + ATP = N-acetyl-L-glutamyl 5-phosphate + ADP. Its pathway is amino-acid biosynthesis; L-arginine biosynthesis; N(2)-acetyl-L-ornithine from L-glutamate: step 2/4. In terms of biological role, catalyzes the ATP-dependent phosphorylation of N-acetyl-L-glutamate. This is Acetylglutamate kinase from Nostoc sp. (strain PCC 7120 / SAG 25.82 / UTEX 2576).